We begin with the raw amino-acid sequence, 362 residues long: Holliday junction branch migration complex subunit RuvB (362 aa).

Positions 4–186 are large ATPase domain (RuvB-L); it reads PDRPQRLVEQ…FGIPLRMQFY (183 aa). ATP contacts are provided by residues Ile25, Arg26, Gly67, Lys70, Thr71, Thr72, 133 to 135, Arg176, Tyr186, and Arg223; that span reads EDF. Thr71 contributes to the Mg(2+) binding site. The small ATPAse domain (RuvB-S) stretch occupies residues 187–257; that stretch reads EPEELQLIVA…AAGGALTRLE (71 aa). The tract at residues 260 to 362 is head domain (RuvB-H); sequence RLGFDAMDRR…GTPEGEGEDV (103 aa). The DNA site is built by Arg296, Arg315, and Arg320.

The protein belongs to the RuvB family. In terms of assembly, homohexamer. Forms an RuvA(8)-RuvB(12)-Holliday junction (HJ) complex. HJ DNA is sandwiched between 2 RuvA tetramers; dsDNA enters through RuvA and exits via RuvB. An RuvB hexamer assembles on each DNA strand where it exits the tetramer. Each RuvB hexamer is contacted by two RuvA subunits (via domain III) on 2 adjacent RuvB subunits; this complex drives branch migration. In the full resolvosome a probable DNA-RuvA(4)-RuvB(12)-RuvC(2) complex forms which resolves the HJ.

The protein resides in the cytoplasm. It carries out the reaction ATP + H2O = ADP + phosphate + H(+). Its function is as follows. The RuvA-RuvB-RuvC complex processes Holliday junction (HJ) DNA during genetic recombination and DNA repair, while the RuvA-RuvB complex plays an important role in the rescue of blocked DNA replication forks via replication fork reversal (RFR). RuvA specifically binds to HJ cruciform DNA, conferring on it an open structure. The RuvB hexamer acts as an ATP-dependent pump, pulling dsDNA into and through the RuvAB complex. RuvB forms 2 homohexamers on either side of HJ DNA bound by 1 or 2 RuvA tetramers; 4 subunits per hexamer contact DNA at a time. Coordinated motions by a converter formed by DNA-disengaged RuvB subunits stimulates ATP hydrolysis and nucleotide exchange. Immobilization of the converter enables RuvB to convert the ATP-contained energy into a lever motion, pulling 2 nucleotides of DNA out of the RuvA tetramer per ATP hydrolyzed, thus driving DNA branch migration. The RuvB motors rotate together with the DNA substrate, which together with the progressing nucleotide cycle form the mechanistic basis for DNA recombination by continuous HJ branch migration. Branch migration allows RuvC to scan DNA until it finds its consensus sequence, where it cleaves and resolves cruciform DNA. The sequence is that of Holliday junction branch migration complex subunit RuvB from Rhodospirillum centenum (strain ATCC 51521 / SW).